A 32-amino-acid polypeptide reads, in one-letter code: Photosystem II reaction center protein T (32 aa).

A helical transmembrane segment spans residues 3-23 (ALVYTFLLIGTLVVIFFAIFF).

Belongs to the PsbT family. In terms of assembly, PSII is composed of 1 copy each of membrane proteins PsbA, PsbB, PsbC, PsbD, PsbE, PsbF, PsbH, PsbI, PsbJ, PsbK, PsbL, PsbM, PsbT, PsbX, PsbY, PsbZ, Psb30/Ycf12, at least 3 peripheral proteins of the oxygen-evolving complex and a large number of cofactors. It forms dimeric complexes.

It is found in the plastid. Its subcellular location is the chloroplast thylakoid membrane. Found at the monomer-monomer interface of the photosystem II (PS II) dimer, plays a role in assembly and dimerization of PSII. PSII is a light-driven water plastoquinone oxidoreductase, using light energy to abstract electrons from H(2)O, generating a proton gradient subsequently used for ATP formation. In Emiliania huxleyi (Coccolithophore), this protein is Photosystem II reaction center protein T.